We begin with the raw amino-acid sequence, 212 residues long: MTIGLVGKKSGMTRIFTENGASVPVTVIEVEPNRVTRVKTVESDGYSAVQVTSGSRKAKHLTKAAAGQYAKSGVEAGRSLMEFRLAEGEEAPEVGGNITVSLFEAGQKVDVTGTSKGKGFQGAVKRWNFRTQDNGHGNSLAHRAPGSIGQCQTPGRVFKGKKMAGQLGNERVTVQSLEIVRVDAERNLLLVKGAVPGATDCEVIVRSAVKAR.

Q152 is subject to N5-methylglutamine.

The protein belongs to the universal ribosomal protein uL3 family. In terms of assembly, part of the 50S ribosomal subunit. Forms a cluster with proteins L14 and L19. Post-translationally, methylated by PrmB.

Functionally, one of the primary rRNA binding proteins, it binds directly near the 3'-end of the 23S rRNA, where it nucleates assembly of the 50S subunit. The polypeptide is Large ribosomal subunit protein uL3 (Chromohalobacter salexigens (strain ATCC BAA-138 / DSM 3043 / CIP 106854 / NCIMB 13768 / 1H11)).